We begin with the raw amino-acid sequence, 191 residues long: Apoptosis regulator BHRF1 (191 aa).

Residues 1 to 18 (MAYSTREILLALCIRDSR) are interaction with host VRK2. N22 is a glycosylation site (N-linked (GlcNAc...) asparagine; by host). Residues 89-109 (EIFHRGDPSLGRALAWMAWCM) carry the BH1 motif. Positions 89–142 (EIFHRGDPSLGRALAWMAWCMHACRTLCCNQSTPYYVVDLSVRGMLEASEGLDG) are interaction with host VRK2. N118 carries N-linked (GlcNAc...) asparagine; by host glycosylation. The BH2 signature appears at 142–157 (GWIHQQGGWSTLIEDN). The helical transmembrane segment at 166–186 (WTLFLAGLTLSLLVICSYLFI) threads the bilayer.

The protein belongs to the Bcl-2 family. In terms of assembly, interacts with isoform 1 of host VRK2; this interaction is involved in protecting cells from apoptosis. Interacts with host PRA1; this interaction seems to modulate BHRF1 anti-apoptotic activity. Interacts with host BCL2L11. Interacts with host BAD and BBC3. Interacts with BALF1; BALF1 acting as a negative regulator of the survival function of BHRF1. Interacts with host BECN1.

The protein resides in the host membrane. The protein localises to the host mitochondrion. Prevents premature death of the host cell during virus production, which would otherwise reduce the amount of progeny virus. Acts as a host B-cell leukemia/lymphoma 2 (Bcl-2) homolog, and interacts with pro-apoptotic proteins to prevent mitochondria permeabilization, release of cytochrome c and subsequent apoptosis of the host cell. In addition, plays a role in the inhibiton of host BECN1-mediated starvation-induced autophagy without affecting basal levels of autophagy. The chain is Apoptosis regulator BHRF1 from Epstein-Barr virus (strain GD1) (HHV-4).